Consider the following 158-residue polypeptide: Protein Smg homolog (158 aa).

The protein belongs to the Smg family.

This chain is Protein Smg homolog, found in Pseudoalteromonas atlantica (strain T6c / ATCC BAA-1087).